Consider the following 515-residue polypeptide: Hopanoid C-3 methylase (515 aa).

Positions 8 to 141 constitute a B12-binding domain; it reads PSPLMYTKVF…ETLARRGNID (134 aa). Residues 181-395 enclose the Radical SAM core domain; the sequence is GTLDPCASIE…DIQHAVLPTR (215 aa). C195, C199, and C202 together coordinate [4Fe-4S] cluster.

It belongs to the radical SAM superfamily. It depends on [4Fe-4S] cluster as a cofactor.

In terms of biological role, required for methylation of hopanoids at the C-3 position. This chain is Hopanoid C-3 methylase, found in Methylococcus capsulatus (strain ATCC 33009 / NCIMB 11132 / Bath).